The primary structure comprises 161 residues: Type IV major fimbrial protein FimA (161 aa).

Positions 1–7 are cleaved as a propeptide — leader sequence; sequence MKSLQKG. Position 8 is an N-methylphenylalanine (F8). A helical transmembrane segment spans residues 8 to 28; sequence FTLIELMIVVAIIGILAAFAI. An intrachain disulfide couples C63 to C105.

The protein belongs to the N-Me-Phe pilin family. In terms of assembly, the pili are polar flexible filaments of about 5.4 nanometers diameter and 2.5 micrometers average length; they consist of only a single polypeptide chain arranged in a helical configuration of five subunits per turn in the assembled pilus.

It localises to the fimbrium. Its subcellular location is the membrane. Its function is as follows. Major component of the type IV fimbriae that plays an essential role in twitching motility, natural transformation, and protease secretion. This Dichelobacter nodosus (Bacteroides nodosus) protein is Type IV major fimbrial protein FimA (fimA).